Consider the following 478-residue polypeptide: Ribosomal RNA small subunit methyltransferase F (478 aa).

S-adenosyl-L-methionine is bound by residues 121 to 127 (ASAPGSK), Glu145, Asp172, and Asp190. Catalysis depends on Cys243, which acts as the Nucleophile.

Belongs to the class I-like SAM-binding methyltransferase superfamily. RsmB/NOP family.

Its subcellular location is the cytoplasm. It carries out the reaction cytidine(1407) in 16S rRNA + S-adenosyl-L-methionine = 5-methylcytidine(1407) in 16S rRNA + S-adenosyl-L-homocysteine + H(+). Its function is as follows. Specifically methylates the cytosine at position 1407 (m5C1407) of 16S rRNA. The sequence is that of Ribosomal RNA small subunit methyltransferase F from Shewanella sediminis (strain HAW-EB3).